A 510-amino-acid polypeptide reads, in one-letter code: Anaerobic nitric oxide reductase transcription regulator NorR (510 aa).

In terms of domain architecture, Sigma-54 factor interaction spans 188–417; the sequence is IIGNSQGMRT…LEHVIKRAAV (230 aa). ATP contacts are provided by residues 216–223 and 279–288; these read GETGVGKE and ADGGTLFLDE. Positions 486–505 form a DNA-binding region, H-T-H motif; sequence WAATARQLELDSGNLHRLAK.

It participates in nitrogen metabolism; nitric oxide reduction. Functionally, required for the expression of anaerobic nitric oxide (NO) reductase, acts as a transcriptional activator for at least the norVW operon. Activation also requires sigma-54. This is Anaerobic nitric oxide reductase transcription regulator NorR from Vibrio vulnificus (strain YJ016).